The chain runs to 70 residues: Sec-independent protein translocase protein TatA (70 aa).

The chain crosses the membrane as a helical span at residues Met1 to Ala21.

Belongs to the TatA/E family. In terms of assembly, the Tat system comprises two distinct complexes: a TatABC complex, containing multiple copies of TatA, TatB and TatC subunits, and a separate TatA complex, containing only TatA subunits. Substrates initially bind to the TatABC complex, which probably triggers association of the separate TatA complex to form the active translocon.

Its subcellular location is the cell inner membrane. Part of the twin-arginine translocation (Tat) system that transports large folded proteins containing a characteristic twin-arginine motif in their signal peptide across membranes. TatA could form the protein-conducting channel of the Tat system. The sequence is that of Sec-independent protein translocase protein TatA from Campylobacter curvus (strain 525.92).